The sequence spans 427 residues: tRNA(Ile)-lysidine synthase (427 aa).

25-30 (SGGLDS) is an ATP binding site.

This sequence belongs to the tRNA(Ile)-lysidine synthase family.

The protein localises to the cytoplasm. The enzyme catalyses cytidine(34) in tRNA(Ile2) + L-lysine + ATP = lysidine(34) in tRNA(Ile2) + AMP + diphosphate + H(+). In terms of biological role, ligates lysine onto the cytidine present at position 34 of the AUA codon-specific tRNA(Ile) that contains the anticodon CAU, in an ATP-dependent manner. Cytidine is converted to lysidine, thus changing the amino acid specificity of the tRNA from methionine to isoleucine. This Histophilus somni (strain 2336) (Haemophilus somnus) protein is tRNA(Ile)-lysidine synthase.